The chain runs to 181 residues: Protein Abitram (181 aa).

Belongs to the ABITRAM family. Interacts with F-actin. Interacts with G-actin.

It is found in the nucleus speckle. Its subcellular location is the cell projection. The protein localises to the lamellipodium. The protein resides in the nucleus. It localises to the growth cone. It is found in the dendrite. Functionally, actin-binding protein that regulates actin polymerization, filopodia dynamics and increases the branching of proximal dendrites of developing neurons. The polypeptide is Protein Abitram (Homo sapiens (Human)).